The following is a 30-amino-acid chain: Cyclotide psyleio E (30 aa).

Residues 1 to 30 (SVTPIVCGETCFGGTCNTPGCSCSWPICTK) constitute a cross-link (cyclopeptide (Ser-Lys)). 3 disulfides stabilise this stretch: cysteine 7–cysteine 21, cysteine 11–cysteine 23, and cysteine 16–cysteine 28.

In terms of processing, this is a cyclic peptide.

In terms of biological role, probably participates in a plant defense mechanism. This is Cyclotide psyleio E from Psychotria leiocarpa.